Consider the following 434-residue polypeptide: Nuclear distribution protein PAC1 (434 aa).

The LisH domain maps to 8–40; that stretch reads QKDDLHKAMLDYLYANNHTAAFNALKESAGITY. Positions 57-83 form a coiled coil; sequence TSVIRLQKKIMELENRNAALQEELSMS. WD repeat units follow at residues 106–147, 149–187, 191–230, 233–272, 275–334, 337–378, and 401–434; these read GHRA…RTLK, HTKP…KNTK, GHDH…QVRT, GHSE…PKSE, GHEN…MIRN, GHDN…RIVE, and KKVN…IWLP.

Belongs to the WD repeat LIS1/nudF family. As to quaternary structure, self-associates. Interacts with NDL1 and dynein.

The protein resides in the cytoplasm. Its subcellular location is the cytoskeleton. It localises to the spindle pole. Its function is as follows. Positively regulates the activity of the minus-end directed microtubule motor protein dynein. May enhance dynein-mediated microtubule sliding by targeting dynein to the microtubule plus end. Required for nuclear migration during vegetative growth as well as development. Required for retrograde early endosome (EE) transport from the hyphal tip. Required for localization of dynein to the mitotic spindle poles. Recruits additional proteins to the dynein complex at SPBs. The protein is Nuclear distribution protein PAC1 of Coprinopsis cinerea (strain Okayama-7 / 130 / ATCC MYA-4618 / FGSC 9003) (Inky cap fungus).